The primary structure comprises 8545 residues: Nuclear anchorage protein 1 (8545 aa).

Residues 1 to 325 (MSSSPPARPC…VITYVSQFVR (325 aa)) form an actin-binding region. At 1–8494 (MSSSPPARPC…QRSRWRRVLR (8494 aa)) the chain is on the cytoplasmic side. The 108-residue stretch at 23 to 130 (KAQKNTFTRW…LIWQIILHFQ (108 aa)) folds into the Calponin-homology (CH) 1 domain. The interval 148 to 197 (TEEPTSSAQPEVVVTAPSPTPSSKKSHSKVSSLSGSKTSLASGEKAPSSP) is disordered. The segment covering 159-190 (VVVTAPSPTPSSKKSHSKVSSLSGSKTSLASG) has biased composition (low complexity). A Calponin-homology (CH) 2 domain is found at 222–328 (QSVEQVFLRW…YVSQFVRMFG (107 aa)). Coiled-coil stretches lie at residues 754–774 (NIRDKLIELERLNEIYDNHSR), 1072–1101 (SFFQLEFDRLNEKLNMLIHDKDKLRELMVH), 1215–1236 (ADILRMKDEKKRDEKTIDEIQA), 1324–1384 (DTKK…QFED), 1574–1629 (RSIE…DLVK), 1725–1754 (ENRNDLEEVKRLAAEIDRAIDTASSMYEDA), 1950–1981 (PAIIESLDKIKDQINNARDNINRQIDNLNYNQ), 2103–2580 (DNIE…KKSD), 2682–2712 (SVKETLDKLKQAKEEDDKLAGVYDELEKIAK), 2852–2949 (IMQE…NIGK), 3002–3119 (DQIV…KTVV), 3178–3295 (DDEK…DEFK), 3346–3417 (QLQH…PEND), 3482–3552 (DELI…EKSL), 3587–3703 (KAEE…ELLD), 3781–3839 (ALKA…KEQL), 3902–4022 (AAHD…KTVV), 4114–4198 (LDVA…DEFK), and 4249–4320 (QLQH…PEND). A compositionally biased stretch (basic and acidic residues) spans 3010-3019 (EAEDVTAKES). Residues 3010 to 3033 (EAEDVTAKESAKKKKKDKKKSPQE) form a disordered region. 6 consecutive repeat copies span residues 3241–4143 (QVAK…KIDP), 4144–5097 (QVAK…KIDP), 5098–6000 (QVAK…KIDP), 6001–6903 (QVAK…KIDP), 6904–7806 (QVAK…KIDP), and 7807–8199 (QVAK…EERA). Residues 3241–8199 (QVAKDIKDSK…TLIPDLEERA (4959 aa)) form a 6 X tandem repeat region. The segment covering 3913 to 3922 (EAEDVTAKES) has biased composition (basic and acidic residues). The tract at residues 3913-3936 (EAEDVTAKESAKKKKKDKKKSPQE) is disordered. A compositionally biased stretch (basic and acidic residues) spans 4372-4393 (ITREDGGDDNKSPDELIDDRGR). Residues 4372–4395 (ITREDGGDDNKSPDELIDDRGRST) are disordered. Coiled coils occupy residues 4436–4506 (DELI…EKSL), 4541–4657 (KAEE…ELLD), 4735–4793 (ALKA…KEQL), 4856–4976 (AAHD…KTVV), 5035–5152 (DDEK…DEFK), 5203–5274 (QLQH…PEND), 5339–5409 (DELI…EKSL), 5444–5560 (KAEE…ELLD), 5638–5696 (ALKA…KEQL), 5759–5879 (AAHD…KTVV), 5938–6055 (DDEK…DEFK), 6106–6177 (QLQH…PEND), 6242–6312 (DELI…EKSL), 6347–6463 (KAEE…ELLD), 6541–6599 (ALKA…KEQL), 6662–6782 (AAHD…KTVV), 6841–6958 (DDEK…DEFK), 7009–7080 (QLQH…PEND), 7145–7215 (DELI…EKSL), 7250–7366 (KAEE…ELLD), 7444–7502 (ALKA…KEQL), 7565–7685 (AAHD…KTVV), 7744–7861 (DDEK…DEFK), 7912–7983 (QLQH…PEND), 8048–8118 (DELI…EKSL), 8153–8204 (KAEE…IWER), 8273–8329 (VAED…DINN), and 8370–8390 (STSIDLDQLLAEAKRLLKEIE). Basic and acidic residues predominate over residues 4867–4876 (EAEDVTAKES). The segment at 4867–4890 (EAEDVTAKESAKKKKKDKKKSPQE) is disordered. Basic and acidic residues predominate over residues 5770–5779 (EAEDVTAKES). The tract at residues 5770 to 5793 (EAEDVTAKESAKKKKKDKKKSPQE) is disordered. Basic and acidic residues predominate over residues 6673-6682 (EAEDVTAKES). Residues 6673-6696 (EAEDVTAKESAKKKKKDKKKSPQE) form a disordered region. Positions 7576-7585 (EAEDVTAKES) are enriched in basic and acidic residues. The disordered stretch occupies residues 7576–7599 (EAEDVTAKESAKKKKKDKKKSPQE). 2 disordered regions span residues 8391 to 8418 (PRLQLAQPDHDNEDDEDEEKGSDEKPYD) and 8449 to 8480 (SDSESRSEFDSLDSRSDGLLSPIPDDSTLSEE). Positions 8401 to 8411 (DNEDDEDEEKG) are enriched in acidic residues. Residues 8451 to 8464 (SESRSEFDSLDSRS) show a composition bias toward basic and acidic residues. In terms of domain architecture, KASH spans 8486–8545 (RSRWRRVLRTALPLQALLVLLMGAACLVPHCDDEYCCQLLNNFAKSFDPSLEFVNGPPPF). A helical; Anchor for type IV membrane protein membrane pass occupies residues 8495 to 8513 (TALPLQALLVLLMGAACLV). Over 8514–8545 (PHCDDEYCCQLLNNFAKSFDPSLEFVNGPPPF) the chain is Perinuclear space.

This sequence belongs to the nesprin family. In terms of assembly, interacts with F-actin via its N-terminal domain. Most likely interacts with unc-84; the interaction is probably required to recruit anc-1 to the nuclear envelope. In terms of tissue distribution, ubiquitously expressed in all postembryonic cells.

It is found in the nucleus outer membrane. The protein resides in the cytoplasm. Its subcellular location is the cytoskeleton. Its function is as follows. Plays a central role in nuclear and mitochondrial anchoring. Probably connects nuclei to the cytoskeleton by interacting with unc-84 at the nuclear envelope and with F-actin in the cytoplasm, creating a bridge across the nuclear envelope between the cytoskeleton and the nucleus. Has a role in positioning of the cell body of the PVQ lumbar interneuron. The polypeptide is Nuclear anchorage protein 1 (Caenorhabditis elegans).